Reading from the N-terminus, the 64-residue chain is MLKFFLKLRKRRRPVVVPRFVRFIVYVVLFTVAVQRVKQERDAHLRRYEERLQKNRARRRQSFP.

Residues 15-37 (VVVPRFVRFIVYVVLFTVAVQRV) form a helical membrane-spanning segment.

It belongs to the HHV-5 US34A protein family.

The protein localises to the host membrane. This is an uncharacterized protein from Homo sapiens (Human).